The following is a 135-amino-acid chain: uncharacterized protein (135 aa).

Helical transmembrane passes span 13–35, 82–101, and 108–130; these read AKVI…AMYL, VAVF…LLSI, and IYRI…PLIL.

It is found in the cell membrane. This is an uncharacterized protein from Archaeoglobus fulgidus (strain ATCC 49558 / DSM 4304 / JCM 9628 / NBRC 100126 / VC-16).